Reading from the N-terminus, the 223-residue chain is Translation initiation factor 6 (223 aa).

Belongs to the eIF-6 family.

In terms of biological role, binds to the 50S ribosomal subunit and prevents its association with the 30S ribosomal subunit to form the 70S initiation complex. This Saccharolobus islandicus (strain Y.N.15.51 / Yellowstone #2) (Sulfolobus islandicus) protein is Translation initiation factor 6.